We begin with the raw amino-acid sequence, 491 residues long: Glutamyl-tRNA(Gln) amidotransferase subunit A (491 aa).

Active-site charge relay system residues include Lys77 and Ser152. The active-site Acyl-ester intermediate is the Ser176.

The protein belongs to the amidase family. GatA subfamily. As to quaternary structure, heterotrimer of A, B and C subunits.

The catalysed reaction is L-glutamyl-tRNA(Gln) + L-glutamine + ATP + H2O = L-glutaminyl-tRNA(Gln) + L-glutamate + ADP + phosphate + H(+). Its function is as follows. Allows the formation of correctly charged Gln-tRNA(Gln) through the transamidation of misacylated Glu-tRNA(Gln) in organisms which lack glutaminyl-tRNA synthetase. The reaction takes place in the presence of glutamine and ATP through an activated gamma-phospho-Glu-tRNA(Gln). This chain is Glutamyl-tRNA(Gln) amidotransferase subunit A (gatA), found in Chlamydia muridarum (strain MoPn / Nigg).